A 374-amino-acid polypeptide reads, in one-letter code: CMP-N-acetylneuraminate-beta-1,4-galactoside alpha-2,3-sialyltransferase (374 aa).

Over 1–8 the chain is Cytoplasmic; that stretch reads MGLLVFVR. A helical; Signal-anchor for type II membrane protein membrane pass occupies residues 9–28; it reads NLLLALCLFLVLGFLYYSAW. Topologically, residues 29 to 374 are lumenal; the sequence is KLHLLQWEDS…RVITDLSSGI (346 aa). Asn-79 and Asn-170 each carry an N-linked (GlcNAc...) asparagine glycan. Residues Cys-159 and Cys-313 are joined by a disulfide bond.

The protein belongs to the glycosyltransferase 29 family. In terms of tissue distribution, found in all tissues tested. High expression found in brain, liver, kidney, colon, heart and spleen.

Its subcellular location is the membrane. It localises to the golgi apparatus. The protein localises to the golgi stack membrane. It carries out the reaction a beta-D-galactosyl-(1-&gt;4)-N-acetyl-beta-D-glucosaminyl derivative + CMP-N-acetyl-beta-neuraminate = an N-acetyl-alpha-neuraminyl-(2-&gt;3)-beta-D-galactosyl-(1-&gt;4)-N-acetyl-beta-D-glucosaminyl derivative + CMP + H(+). Its pathway is protein modification; protein glycosylation. Functionally, catalyzes the formation of the NeuAc-alpha-2,3-Gal-beta-1,4-GlcNAc-, NeuAc-alpha-2,3-Gal-beta-1,3-GlcNAc- and NeuAc-alpha-2,3-Gal-beta-1,3-GalNAc- sequences found in terminal carbohydrate groups of glycoproteins and glycolipids. The highest activity is toward Gal-beta-1,3-GlcNAc and the lowest toward Gal-beta-1,3-GalNAc. The chain is CMP-N-acetylneuraminate-beta-1,4-galactoside alpha-2,3-sialyltransferase (St3gal3) from Mus musculus (Mouse).